Consider the following 158-residue polypeptide: Deoxyuridine 5'-triphosphate nucleotidohydrolase (158 aa).

Residues 75–77 (RSG), N88, 92–94 (TVD), and K102 each bind substrate.

It belongs to the dUTPase family. The cofactor is Mg(2+).

It carries out the reaction dUTP + H2O = dUMP + diphosphate + H(+). It participates in pyrimidine metabolism; dUMP biosynthesis; dUMP from dCTP (dUTP route): step 2/2. Functionally, this enzyme is involved in nucleotide metabolism: it produces dUMP, the immediate precursor of thymidine nucleotides and it decreases the intracellular concentration of dUTP so that uracil cannot be incorporated into DNA. This chain is Deoxyuridine 5'-triphosphate nucleotidohydrolase, found in Bifidobacterium longum (strain DJO10A).